The chain runs to 282 residues: Fibrinogen-like protein A (282 aa).

Positions 1 to 24 (MFSFIMKAAILLILVGCISFCISS) are cleaved as a signal peptide. Residues 61-281 (SHSPEYPRDC…FAEMKLRNRS (221 aa)) enclose the Fibrinogen C-terminal domain. Intrachain disulfides connect C70–C101 and C224–C240.

The polypeptide is Fibrinogen-like protein A (Apostichopus parvimensis (Warty sea cucumber)).